The sequence spans 62 residues: Photosystem II reaction center protein Z (62 aa).

2 consecutive transmembrane segments (helical) span residues 8–28 and 41–61; these read AVFALIATSSLLLISVPVVFA and FSGTSLWIGLVFLVGILNSLI.

This sequence belongs to the PsbZ family. As to quaternary structure, PSII is composed of 1 copy each of membrane proteins PsbA, PsbB, PsbC, PsbD, PsbE, PsbF, PsbH, PsbI, PsbJ, PsbK, PsbL, PsbM, PsbT, PsbY, PsbZ, Psb30/Ycf12, at least 3 peripheral proteins of the oxygen-evolving complex and a large number of cofactors. It forms dimeric complexes.

The protein resides in the plastid. It is found in the chloroplast thylakoid membrane. Its function is as follows. May control the interaction of photosystem II (PSII) cores with the light-harvesting antenna, regulates electron flow through the 2 photosystem reaction centers. PSII is a light-driven water plastoquinone oxidoreductase, using light energy to abstract electrons from H(2)O, generating a proton gradient subsequently used for ATP formation. This chain is Photosystem II reaction center protein Z, found in Oenothera elata subsp. hookeri (Hooker's evening primrose).